A 423-amino-acid polypeptide reads, in one-letter code: MANIIKAIRGMNDCSPTDSPLWQWIEDKVRNVLASYGYSEVRMPIVESTPLFARAIGEVTDVVSKEMYTFWDNDEQLTLRPEGTAGCVRAAIENGWIYNNEQRLWYMGPMFRHERPQKGRYRQFHQAGVEIFGIANPEIDAELIILTARLWKELGIEQHVSLQLNSIGSLAARAGYRTALVAFLENHQALMSDEEKERLLKNPLRILDTKNEALQEVLNDAPKLLDYLDDESRQHFTQLCALLDNMGVQYEINPKLVRGLDYYNKTVFEWVTSALGAQGTVCGGGRYDGLVEQLGGHATQGVGFAMGLERLVLLVQEVNKNISVPNAVDIYVVFSGEGTTLAAFQTAEKIRSELPHLRVMTHCSGGKFQKQFKRADKLGAKLALVIGESEVQTDRVVVKDLSGAVEQQTISVVELIDYLKRVF.

This sequence belongs to the class-II aminoacyl-tRNA synthetase family. Homodimer.

Its subcellular location is the cytoplasm. It catalyses the reaction tRNA(His) + L-histidine + ATP = L-histidyl-tRNA(His) + AMP + diphosphate + H(+). This Actinobacillus succinogenes (strain ATCC 55618 / DSM 22257 / CCUG 43843 / 130Z) protein is Histidine--tRNA ligase.